A 365-amino-acid chain; its full sequence is G-protein coupled receptor 68 (365 aa).

The Extracellular portion of the chain corresponds to 1–12 (MGNITADNSSMS). 2 N-linked (GlcNAc...) asparagine glycosylation sites follow: asparagine 3 and asparagine 8. Residues 13–49 (CTIDHTIHQTLAPVVYVTVLVVGFPANCLSLYFGYLQ) form a helical membrane-spanning segment. Cystine bridges form between cysteine 13–cysteine 258 and cysteine 94–cysteine 172. At 50–53 (IKAR) the chain is on the cytoplasmic side. A helical membrane pass occupies residues 54–84 (NELGVYLCNLTVADLFYICSLPFWLQYVLQH). The Extracellular segment spans residues 85 to 89 (DNWSH). Residues 90 to 125 (GDLSCQVCGILLYENIYISVGFLCCISVDRYLAVAH) traverse the membrane as a helical segment. Residues 126-133 (PFRFHQFR) lie on the Cytoplasmic side of the membrane. Residues 134-160 (TLKAAVGVSVVIWAKELLTSIYFLMHE) form a helical membrane-spanning segment. Residues 161 to 176 (EVIEDENQHRVCFEHY) are Extracellular-facing. Positions 161–176 (EVIEDENQHRVCFEHY) are extracellular loop 2 (ECL2). The helical transmembrane segment at 177–214 (PIQAWQRAINYYRFLVGFLFPICLLLASYQGILRAVRR) threads the bilayer. The Cytoplasmic segment spans residues 215 to 218 (SHGT). The chain crosses the membrane as a helical span at residues 219-254 (QKSRKDQIQRLVLSTVVIFLACFLPYHVLLLVRSVW). Residues 255–260 (EASCDF) lie on the Extracellular side of the membrane. A helical transmembrane segment spans residues 261 to 289 (AKGVFNAYHFSLLLTSFNCVADPVLYCFV). Over 290 to 365 (SETTHRDLAR…SGGFPTGRLA (76 aa)) the chain is Cytoplasmic. The tract at residues 345–365 (HPAFQTPNSPGSGGFPTGRLA) is disordered. Gly residues predominate over residues 355–365 (GSGGFPTGRLA).

It belongs to the G-protein coupled receptor 1 family. As to expression, found at low level in a wide range of tissues, but significantly expressed in lung, kidney, bone and nervous system.

The protein resides in the cell membrane. Activated by a network of residues that connects an extracellular-facing cavity to Glu-149, a conserved charged residue buried in the transmembrane core of the receptor. Protonation likely drives conformational changes in extracellular loop 2 (ECL2), which stabilizes movement of transmembrane 3 (TM3) and a series of rearrangements that connect the extracellular-facing cavity to Glu-149, a residue only conserved in proton-sensing G-protein coupled receptors. Activated in an allosteric manner by divalent metal ions at the extracellular surface following the order: Cd(2+) &gt; Co(2+) &gt; Ni(2+) &gt; Zn(2+) &gt; Fe(2+) &gt; Ca(2+) &gt; Mg(2+). Activated by the benzodiazepine drug lorazepam, a non-selective GPR68 positive allosteric modulator. Activated by ogerin (ZINC67740571), a selective GPR68 positive allosteric modulator. Activated by small molecule MS48107, a selective positive allosteric modulator. Inhibited by small molecule ogremorphin, inducing ferroptosis in cancer cells. Functionally, proton-sensing G-protein coupled receptor activated by extracellular pH, which is required to monitor pH changes and generate adaptive reactions. The receptor is almost silent at pH 7.8 but fully activated at pH 6.8. Ligand binding causes a conformation change that triggers signaling via guanine nucleotide-binding proteins (G proteins) and modulates the activity of downstream effectors, such as phospholipase C. GPR68 is mainly coupled to G(q) G proteins and mediates production of diacylglycerol (DAG) and inositol 1,4,5-trisphosphate (IP3). Acts as a key mechanosensor of fluid shear stress and membrane stretch. Expressed in endothelial cells of small-diameter resistance arteries, where it mediates flow-induced dilation in response to shear stress. May represents an osteoblastic pH sensor regulating cell-mediated responses to acidosis in bone. Acts as a regulator of calcium-sensing receptor CASR in a seesaw manner: GPR68-mediated signaling inhibits CASR signaling in response to protons, while CASR inhibits GPR68 in presence of extracellular calcium. In Homo sapiens (Human), this protein is G-protein coupled receptor 68.